The primary structure comprises 315 residues: Homoserine kinase (315 aa).

ATP is bound at residue 96–106; it reads PHSRGLGSSAA.

Belongs to the GHMP kinase family. Homoserine kinase subfamily.

The protein localises to the cytoplasm. It catalyses the reaction L-homoserine + ATP = O-phospho-L-homoserine + ADP + H(+). Its pathway is amino-acid biosynthesis; L-threonine biosynthesis; L-threonine from L-aspartate: step 4/5. Catalyzes the ATP-dependent phosphorylation of L-homoserine to L-homoserine phosphate. The protein is Homoserine kinase of Mycolicibacterium paratuberculosis (strain ATCC BAA-968 / K-10) (Mycobacterium paratuberculosis).